Reading from the N-terminus, the 417-residue chain is MSIIHLTTLNFSLLWTIALPPIAGTIIGYFTNDIAIKMLFRPYKAVYIGERRLPFTPGLIPRNQERLAKKISDTIMGSLLTPEELQNLARRLLQTERVQAAILWLLNLAIQQVKDDKNQKTAKILADILRDLFSESLPRLLKALARREDFLEQQINQIFDQVLLDFRLTDAQARQFADWLLETVVPPDVLRRTLIDFLTDRNIQVIDEGFREKTSGTYWVVANLFGLSNTLVRLRSFCLEEQELANTRLKEILLSLEVRSRLREWLQSLCLQNLPVSTVRQLRKTTRETVRSYIQESGADFLQNLGETVDWEQISILIMNRLQTSAALTTSLETISQELALILERYLEEDLEKIVAQAIPILSIDQVIINRVNATSPENLEMAIQGIVKSELQAIVNIGGVLGFLVGVFQSILLIFR.

A run of 2 helical transmembrane segments spans residues 11-31 and 395-415; these read FSLL…GYFT and IVNI…ILLI.

Belongs to the UPF0754 family.

The protein localises to the cell inner membrane. The chain is UPF0754 membrane protein PCC8801_0398 from Rippkaea orientalis (strain PCC 8801 / RF-1) (Cyanothece sp. (strain PCC 8801)).